A 330-amino-acid chain; its full sequence is Phosphate acyltransferase (330 aa).

Belongs to the PlsX family. Homodimer. Probably interacts with PlsY.

It is found in the cytoplasm. The catalysed reaction is a fatty acyl-[ACP] + phosphate = an acyl phosphate + holo-[ACP]. It participates in lipid metabolism; phospholipid metabolism. Its function is as follows. Catalyzes the reversible formation of acyl-phosphate (acyl-PO(4)) from acyl-[acyl-carrier-protein] (acyl-ACP). This enzyme utilizes acyl-ACP as fatty acyl donor, but not acyl-CoA. This Bacillus cereus (strain AH820) protein is Phosphate acyltransferase.